The following is a 458-amino-acid chain: Ribulose bisphosphate carboxylase (458 aa).

Asn-111 is a substrate binding site. Catalysis depends on Lys-166, which acts as the Proton acceptor. Lys-168 contacts substrate. Residues Lys-191, Asp-193, and Glu-194 each contribute to the Mg(2+) site. Lys-191 bears the N6-carboxylysine mark. The active-site Proton acceptor is the His-287. Residues Arg-288, His-321, and Ser-368 each coordinate substrate.

The protein belongs to the RuBisCO large chain family. Type II subfamily. Homodimer. It depends on Mg(2+) as a cofactor.

The catalysed reaction is 2 (2R)-3-phosphoglycerate + 2 H(+) = D-ribulose 1,5-bisphosphate + CO2 + H2O. The enzyme catalyses D-ribulose 1,5-bisphosphate + O2 = 2-phosphoglycolate + (2R)-3-phosphoglycerate + 2 H(+). Its function is as follows. RuBisCO catalyzes two reactions: the carboxylation of D-ribulose 1,5-bisphosphate, the primary event in carbon dioxide fixation, as well as the oxidative fragmentation of the pentose substrate. Both reactions occur simultaneously and in competition at the same active site. The polypeptide is Ribulose bisphosphate carboxylase (cbbM) (Rhodobacter capsulatus (strain ATCC BAA-309 / NBRC 16581 / SB1003)).